The sequence spans 627 residues: Myelin-associated glycoprotein (627 aa).

The signal sequence occupies residues 1–19; sequence MIFLATLPLFWIMISASRG. Residues 20-325 are interaction with RTN4R and RTN4RL2; the sequence is GHWGAWMPST…RTVELSVMYA (306 aa). Over 20–516 the chain is Extracellular; the sequence is GHWGAWMPST…HRLMWAKIGP (497 aa). C-linked (Man) tryptophan glycosylation occurs at tryptophan 22. One can recognise an Ig-like V-type domain in the interval 22-120; it reads WGAWMPSTIS…LGGKYYFRGD (99 aa). 3 cysteine pairs are disulfide-bonded: cysteine 37/cysteine 165, cysteine 42/cysteine 100, and cysteine 159/cysteine 217. A ganglioside GT1b (d18:1(4E)) is bound at residue 65–67; it reads YPK. Asparagine 99 carries N-linked (GlcNAc...) asparagine glycosylation. Residues arginine 118 and 124–128 contribute to the a ganglioside GT1b (d18:1(4E)) site; that span reads YNQYT. 4 consecutive Ig-like C2-type domains span residues 139–237, 241–325, 327–412, and 413–508; these read NTPN…LDVK, VIVE…VMYA, WKPT…VEFA, and PIIL…GAHR. Asparagine 223 and asparagine 246 each carry an N-linked (GlcNAc...) asparagine glycan. An intrachain disulfide couples cysteine 261 to cysteine 305. N-linked (GlcNAc...) asparagine glycans are attached at residues asparagine 315 and asparagine 332. The cysteines at positions 347 and 392 are disulfide-linked. N-linked (GlcNAc...) asparagine glycosylation occurs at asparagine 406. Cystine bridges form between cysteine 421–cysteine 430 and cysteine 432–cysteine 488. Residues asparagine 450 and asparagine 454 are each glycosylated (N-linked (GlcNAc...) asparagine). A helical transmembrane segment spans residues 517–536; that stretch reads VGAVVAFAILIAIVCYITQT. A lipid anchor (S-palmitoyl cysteine) is attached at cysteine 531. At 537-627 the chain is on the cytoplasmic side; the sequence is RRKKNVTESS…LAEYAEIRVK (91 aa). A phosphoserine mark is found at serine 545, serine 547, serine 549, and serine 591. Residues 578 to 627 are required for normal axon myelination in the central nervous system; that stretch reads LGSERRLLGLRGESPELDLSYSHSDLGKRPTKDSYTLTEELAEYAEIRVK.

Belongs to the immunoglobulin superfamily. SIGLEC (sialic acid binding Ig-like lectin) family. In terms of assembly, monomer and homodimer. Interacts (via the first three N-terminal Ig-like domains) with RTN4R and RTN4RL2. Interacts with isoform 2 of BSG. Post-translationally, N-glycosylated. In terms of processing, phosphorylated on tyrosine residues. Ubiquitinated, leading to proteasomal degradation. Detected in the myelin tract in brain, especially in the corpus callosum and in peripheral nerve. Expressed by myelinating glial cells in the central and peripheral nervous system. Detected in oligodendrocyte processes before formation of compact myelin. Restricted to the periaxonal space after myelination. Isoform S-MAG is the predominant isoform in CNS and PNS of the adult (at protein level).

Its subcellular location is the cell membrane. It localises to the membrane raft. In terms of biological role, adhesion molecule that mediates interactions between myelinating cells and neurons by binding to neuronal sialic acid-containing gangliosides and to the glycoproteins RTN4R and RTN4RL2. Not required for initial myelination, but seems to play a role in the maintenance of normal axon myelination. Protects motoneurons against apoptosis, also after injury; protection against apoptosis is probably mediated via interaction with neuronal RTN4R and RTN4RL2. Required to prevent degeneration of myelinated axons in adults; this probably depends on binding to gangliosides on the axon cell membrane. Negative regulator of neurite outgrowth that inhibits axon longitudinal growth. Negative regulator of neurite outgrowth; in dorsal root ganglion neurons the inhibition is mediated primarily via binding to neuronal RTN4R or RTN4RL2 and to a lesser degree via binding to neuronal gangliosides. In cerebellar granule cells the inhibition is mediated via binding to neuronal gangliosides. In sensory neurons, inhibition of neurite extension depends only partially on RTN4R, RTN4RL2 and gangliosides. Inhibits axon outgrowth by binding to RTN4R. Preferentially binds to alpha-2,3-linked sialic acid. Binds ganglioside Gt1b. The protein is Myelin-associated glycoprotein (Mag) of Mus musculus (Mouse).